A 222-amino-acid chain; its full sequence is Pro-opiomelanocortin-1 (222 aa).

A signal peptide spans 1–28 (MVRGERMLCPAWLLALAVLCAAGSEVRA). The propeptide occupies 29–105 (QCMEDARCRD…DPESSPQHEH (77 aa)).

The protein belongs to the POMC family. Specific enzymatic cleavages at paired basic residues yield the different active peptides.

The protein localises to the secreted. In terms of biological role, stimulates the adrenal glands to release cortisol. Functionally, anorexigenic peptide. Increases the pigmentation of skin by increasing melanin production in melanocytes. Its function is as follows. Increases the pigmentation of skin by increasing melanin production in melanocytes. Endogenous orexigenic opiate. In terms of biological role, endogenous opiate. The polypeptide is Pro-opiomelanocortin-1 (pomca) (Cyprinus carpio (Common carp)).